The following is a 206-amino-acid chain: ATP-dependent Clp protease proteolytic subunit 1 (206 aa).

Residue Ser106 is the Nucleophile of the active site. Residue His131 is part of the active site.

This sequence belongs to the peptidase S14 family. Fourteen ClpP subunits assemble into 2 heptameric rings which stack back to back to give a disk-like structure with a central cavity, resembling the structure of eukaryotic proteasomes.

Its subcellular location is the cytoplasm. The catalysed reaction is Hydrolysis of proteins to small peptides in the presence of ATP and magnesium. alpha-casein is the usual test substrate. In the absence of ATP, only oligopeptides shorter than five residues are hydrolyzed (such as succinyl-Leu-Tyr-|-NHMec, and Leu-Tyr-Leu-|-Tyr-Trp, in which cleavage of the -Tyr-|-Leu- and -Tyr-|-Trp bonds also occurs).. In terms of biological role, cleaves peptides in various proteins in a process that requires ATP hydrolysis. Has a chymotrypsin-like activity. Plays a major role in the degradation of misfolded proteins. The polypeptide is ATP-dependent Clp protease proteolytic subunit 1 (Methylococcus capsulatus (strain ATCC 33009 / NCIMB 11132 / Bath)).